Here is a 295-residue protein sequence, read N- to C-terminus: Ventral anterior homeobox 1a (295 aa).

The span at 20–33 shows a compositional bias: basic and acidic residues; that stretch reads ISKPKDNKEIRETQ. The interval 20–63 is disordered; sequence ISKPKDNKEIRETQAKMPSTYLKEQPGTYPAPGSSELCAKNKSS. The homeobox DNA-binding region spans 97–156; the sequence is PKRSRTSFTAEQLYRLEMEFQRCQYVVGRERTDLSRQLNLSETQVKVWFQNRRTKQKKDQ. Positions 203–226 are disordered; it reads RAPNSSGPGTRSLATVTSTPPHQP. Positions 204 to 222 are enriched in polar residues; that stretch reads APNSSGPGTRSLATVTSTP.

It belongs to the EMX homeobox family.

The protein resides in the nucleus. May play a role in the specification and maintenance of basal forebrain identity. The polypeptide is Ventral anterior homeobox 1a (vax1-a) (Xenopus laevis (African clawed frog)).